The sequence spans 679 residues: Stress-70 protein, mitochondrial (679 aa).

The transit peptide at 1-46 (MISATRAAAARLVGTAASRTPAAARHQDGWNGLSHEAFRFVSRRDY) directs the protein to the mitochondrion. The segment at 1–432 (MISATRAAAA…IQGGVLAGDV (432 aa)) is interaction with NFS1. Positions 63 and 64 each coordinate ADP. The segment at 63 to 431 (TNSCVAVMEG…AIQGGVLAGD (369 aa)) is nucleotide-binding domain (NBD). Lys76 carries the post-translational modification N6-acetyllysine. Position 87 is a phosphothreonine (Thr87). An N6-acetyllysine; alternate mark is found at Lys135 and Lys138. N6-succinyllysine; alternate is present on residues Lys135 and Lys138. Residue Lys143 is modified to N6-acetyllysine. Lys206 is subject to N6-acetyllysine; alternate. Lys206 is subject to N6-succinyllysine; alternate. Lys206 bears the N6-malonyllysine; alternate mark. Lys234 and Lys288 each carry N6-acetyllysine. Lys300 carries the N6-acetyllysine; alternate modification. The residue at position 300 (Lys300) is an N6-succinyllysine; alternate. Residues Glu313, Lys316, and Ser320 each coordinate ADP. Residue Lys360 is modified to N6-acetyllysine; alternate. Lys360 is subject to N6-succinyllysine; alternate. Lys368 is modified (N6-succinyllysine). ADP contacts are provided by Gly388 and Arg391. Lys394 is subject to N6-succinyllysine. At Ser408 the chain carries Phosphoserine. Positions 432–441 (VTDVLLLDVT) are interdomain linker. Residues 432 to 679 (VTDVLLLDVT…QKEDQKEEKQ (248 aa)) are interaction with FXN and ISCU. The substrate-binding domain (SBD) stretch occupies residues 442-679 (PLSLGIETLG…QKEDQKEEKQ (238 aa)). Position 513 is an omega-N-methylarginine (Arg513). An N6-acetyllysine; alternate mark is found at Lys567 and Lys600. N6-succinyllysine; alternate is present on residues Lys567 and Lys600. Lys610 carries the N6-succinyllysine modification. Lys612 carries the post-translational modification N6-acetyllysine. Residue Lys646 is modified to N6-acetyllysine; alternate. Lys646 carries the N6-succinyllysine; alternate modification. The segment at 656 to 679 (ASEREGSGSSGTGEQKEDQKEEKQ) is disordered. The span at 669–679 (EQKEDQKEEKQ) shows a compositional bias: basic and acidic residues.

It belongs to the heat shock protein 70 family. Interacts strongly with the intermediate form of FXN and weakly with its mature form. Interacts with HSCB. Associates with the mitochondrial contact site and cristae organizing system (MICOS) complex, composed of at least MICOS10/MIC10, CHCHD3/MIC19, CHCHD6/MIC25, APOOL/MIC27, IMMT/MIC60, APOO/MIC23/MIC26 and QIL1/MIC13. This complex was also known under the names MINOS or MitOS complex. The MICOS complex associates with mitochondrial outer membrane proteins SAMM50, MTX1, MTX2 and DNAJC11, mitochondrial inner membrane protein TMEM11 and with HSPA9. Interacts with DNLZ, the interaction is required to prevent self-aggregation. Interacts with TESPA1. Interacts with PDPN. Interacts with NFU1, NFS1 and ISCU. Interacts with TP53; the interaction promotes TP53 degradation. Interacts (via SBD domain) with UBXN2A; the interaction with UBXN2A inhibits HSPA9/MOT-2 interaction with and degradation of TP53, thereby promotes TP53 translocation to the nucleus. Interacts with ITPR1 AND VDAC1; this interaction couples ITPR1 to VDAC1. Component of the TIM23 mitochondrial inner membrane pre-sequence translocase complex.

It is found in the mitochondrion. Its subcellular location is the nucleus. The protein localises to the nucleolus. It localises to the cytoplasm. The protein resides in the mitochondrion matrix. It catalyses the reaction ATP + H2O = ADP + phosphate + H(+). The chaperone activity is regulated by ATP-induced allosteric coupling of the nucleotide-binding (NBD) and substrate-binding (SBD) domains. ATP binding in the NBD leads to a conformational change in the NBD, which is transferred through the interdomain linker (IDL) to the substrate-binding domain (SBD). This elicits a reduced substrate affinity and a faster substrate exchange rate. Upon hydrolysis of ATP to ADP, the protein undergoes a conformational change that increases its affinity for substrate proteins. It cycles through repeated phases of ATP hydrolysis and nucleotide exchange, facilitating repeated cycles of substrate binding and release. Functions in collaboration with co-chaperones. Functions with the co-chaperone, DNLZ, to maintain solubility and regulate ATP hydrolysis. Nucleotide exchange factors, GRPEL1 and GRPEL2, accelerate nucleotide exchange. Its function is as follows. Mitochondrial chaperone that plays a key role in mitochondrial protein import, folding, and assembly. Plays an essential role in the protein quality control system, the correct folding of proteins, the re-folding of misfolded proteins, and the targeting of proteins for subsequent degradation. These processes are achieved through cycles of ATP binding, ATP hydrolysis, and ADP release, mediated by co-chaperones. In mitochondria, it associates with the TIM (translocase of the inner membrane) protein complex to assist in the import and folding of mitochondrial proteins. Plays an important role in mitochondrial iron-sulfur cluster (ISC) biogenesis, interacts with and stabilizes ISC cluster assembly proteins FXN, NFU1, NFS1 and ISCU. Regulates erythropoiesis via stabilization of ISC assembly. Regulates mitochondrial calcium-dependent apoptosis by coupling two calcium channels, ITPR1 and VDAC1, at the mitochondria-associated endoplasmic reticulum (ER) membrane to facilitate calcium transport from the ER lumen to the mitochondria intermembrane space, providing calcium for the downstream calcium channel MCU, which releases it into the mitochondrial matrix. Although primarily located in the mitochondria, it is also found in other cellular compartments. In the cytosol, it associates with proteins involved in signaling, apoptosis, or senescence. It may play a role in cell cycle regulation via its interaction with and promotion of degradation of TP53. May play a role in the control of cell proliferation and cellular aging. Protects against reactive oxygen species (ROS). Extracellular HSPA9 plays a cytoprotective role by preventing cell lysis following immune attack by the membrane attack complex by disrupting formation of the complex. In Cricetulus griseus (Chinese hamster), this protein is Stress-70 protein, mitochondrial.